We begin with the raw amino-acid sequence, 203 residues long: Large ribosomal subunit protein uL3 (203 aa).

It belongs to the universal ribosomal protein uL3 family. In terms of assembly, part of the 50S ribosomal subunit. Forms a cluster with proteins L14 and L19.

Functionally, one of the primary rRNA binding proteins, it binds directly near the 3'-end of the 23S rRNA, where it nucleates assembly of the 50S subunit. The chain is Large ribosomal subunit protein uL3 from Christiangramia forsetii (strain DSM 17595 / CGMCC 1.15422 / KT0803) (Gramella forsetii).